The following is a 221-amino-acid chain: Lectin L6 (221 aa).

6 consecutive repeat copies span residues 1 to 38, 39 to 75, 76 to 113, 114 to 150, 151 to 188, and 189 to 221. Residues 1-221 form a 6 X approximate tandem repeats region; it reads VQWHQIPGKL…NSVDNIYRSG (221 aa). C32 and C36 are oxidised to a cystine. C108 and C112 are oxidised to a cystine. A disulfide bridge links C183 with C187.

It belongs to the tectonin family. As to expression, hemocytes.

The protein localises to the cytoplasmic vesicle. Its subcellular location is the secretory vesicle. Its function is as follows. Lipopolysaccharide-binding protein with Gram-negative antibacterial activity. Binds zinc and calcium. This chain is Lectin L6, found in Tachypleus tridentatus (Japanese horseshoe crab).